Consider the following 185-residue polypeptide: Ribosome-recycling factor (185 aa).

A disordered region spans residues 145–164; the sequence is DGEAGEDEVSRAEKDLDKTT.

This sequence belongs to the RRF family.

The protein resides in the cytoplasm. Responsible for the release of ribosomes from messenger RNA at the termination of protein biosynthesis. May increase the efficiency of translation by recycling ribosomes from one round of translation to another. The polypeptide is Ribosome-recycling factor (Mycobacterium sp. (strain JLS)).